Reading from the N-terminus, the 377-residue chain is MSRGIIIIGSGFAARQLVKNIRKQDAHVPLTLIAADSMDEYNKPDLSHVISQSQRADDLTRQLAGEFAEQFNLRLFPHTWVTDIDADAHVVKSQDKQWQYDKLVLATGAAAFVPPIAGRELMLTLNSQQEYRACETQLRDAQRVLIVGGGLIGSELAMDFCRAGKTVTLMDNAASLLASLMPPEVSSRLQHHLTDMGVHLLLKSQLQKLEKTEAGIRATLVSQHSIEVDAVIAATGLRPETALARRAGVAVNRGVCVDSYLQTSHPDIYAIGDCAEINGQVLPFLQPIQLSAMYLAKNLLGGSAPLKLPAMLVKVKTPELPLHLAGETQRHDLSWQITAESDGMIAKGMSGEGQLRAFVVSEDRMKEAFALLKTLSV.

The protein belongs to the FAD-dependent oxidoreductase family. FAD serves as cofactor.

The protein localises to the cytoplasm. The catalysed reaction is 2 reduced [nitric oxide reductase rubredoxin domain] + NAD(+) + H(+) = 2 oxidized [nitric oxide reductase rubredoxin domain] + NADH. It functions in the pathway nitrogen metabolism; nitric oxide reduction. One of at least two accessory proteins for anaerobic nitric oxide (NO) reductase. Reduces the rubredoxin moiety of NO reductase. The polypeptide is Nitric oxide reductase FlRd-NAD(+) reductase (Salmonella heidelberg (strain SL476)).